Reading from the N-terminus, the 198-residue chain is Probable GTP-binding protein EngB (198 aa).

The 175-residue stretch at 21-195 folds into the EngB-type G domain; that stretch reads NFSEVAFLGR…EDIIINQTLG (175 aa). GTP-binding positions include 29–36, 56–60, 81–84, 151–154, and 174–176; these read GRSNVGKS, GKTQL, DLPG, TKCD, and VSN. Positions 36 and 58 each coordinate Mg(2+).

This sequence belongs to the TRAFAC class TrmE-Era-EngA-EngB-Septin-like GTPase superfamily. EngB GTPase family. The cofactor is Mg(2+).

Its function is as follows. Necessary for normal cell division and for the maintenance of normal septation. This Campylobacter jejuni subsp. jejuni serotype O:2 (strain ATCC 700819 / NCTC 11168) protein is Probable GTP-binding protein EngB.